The primary structure comprises 209 residues: Thymidine kinase (209 aa).

ATP contacts are provided by residues 16 to 23 and 90 to 93; these read GPMFAGKT and DEAQ. The active-site Proton acceptor is the Glu91.

It belongs to the thymidine kinase family. As to quaternary structure, homotetramer.

It is found in the cytoplasm. The enzyme catalyses thymidine + ATP = dTMP + ADP + H(+). The chain is Thymidine kinase from Onion yellows phytoplasma (strain OY-M).